A 234-amino-acid polypeptide reads, in one-letter code: Orotate phosphoribosyltransferase (234 aa).

Lysine 30 provides a ligand contact to 5-phospho-alpha-D-ribose 1-diphosphate. Residue 38 to 39 (FF) participates in orotate binding. Residues 76–77 (YK), arginine 103, lysine 104, lysine 107, histidine 109, and 128–136 (DDVITAGTA) each bind 5-phospho-alpha-D-ribose 1-diphosphate. Orotate-binding residues include threonine 132 and arginine 160.

It belongs to the purine/pyrimidine phosphoribosyltransferase family. PyrE subfamily. As to quaternary structure, homodimer. Mg(2+) serves as cofactor.

It catalyses the reaction orotidine 5'-phosphate + diphosphate = orotate + 5-phospho-alpha-D-ribose 1-diphosphate. It participates in pyrimidine metabolism; UMP biosynthesis via de novo pathway; UMP from orotate: step 1/2. Catalyzes the transfer of a ribosyl phosphate group from 5-phosphoribose 1-diphosphate to orotate, leading to the formation of orotidine monophosphate (OMP). The protein is Orotate phosphoribosyltransferase of Chromohalobacter salexigens (strain ATCC BAA-138 / DSM 3043 / CIP 106854 / NCIMB 13768 / 1H11).